Reading from the N-terminus, the 409-residue chain is MAIEIKAPTFPESVADGTVATWHKKPGEAVKRDELIVDIETDKVVIEVLAEADGVLAEIIKNEGDTVLSNELLGKLNEGGAAAPAAPAAAAPAAAPAAQAAAPAAAGGDDAILSPAARKLAEEAGIDPNSIAGTGKGGRVTKEDVVAAVEAKKNAPAAPAKPAAPAAEAPIFAAGDRVEKRVPMTRLRAKVAERLVEAQSAMAMLTTFNEVNMKPIMDLRSKYKDLFEKKHNGVRLGFMSFFVKAATEALKRFPGVNASIDGNDIVYHGYQDIGVAVSSDRGLVVPVLRNAEFMSLAEIEGGIANFGKKAKEGKLTIEDMTGGTFTISNGGVFGSLLSTPIVNPPQTAILGMHKIQERPMAVNGQVVILPMMYLALSYDHRLIDGKEAVSFLVAIKDLLEDPARLLLDV.

Residues Ala2 to Asn77 form the Lipoyl-binding domain. Position 43 is an N6-lipoyllysine (Lys43). Positions Ile112 to Val149 constitute a Peripheral subunit-binding (PSBD) domain. Catalysis depends on residues His380 and Asp384.

The protein belongs to the 2-oxoacid dehydrogenase family. In terms of assembly, forms a 24-polypeptide structural core with octahedral symmetry. Part of the 2-oxoglutarate dehydrogenase (OGDH) complex composed of E1 (2-oxoglutarate dehydrogenase), E2 (dihydrolipoamide succinyltransferase) and E3 (dihydrolipoamide dehydrogenase); the complex contains multiple copies of the three enzymatic components (E1, E2 and E3). It depends on (R)-lipoate as a cofactor.

It carries out the reaction N(6)-[(R)-dihydrolipoyl]-L-lysyl-[protein] + succinyl-CoA = N(6)-[(R)-S(8)-succinyldihydrolipoyl]-L-lysyl-[protein] + CoA. It participates in amino-acid degradation; L-lysine degradation via saccharopine pathway; glutaryl-CoA from L-lysine: step 6/6. Its function is as follows. E2 component of the 2-oxoglutarate dehydrogenase (OGDH) complex which catalyzes the second step in the conversion of 2-oxoglutarate to succinyl-CoA and CO(2). The protein is Dihydrolipoyllysine-residue succinyltransferase component of 2-oxoglutarate dehydrogenase complex (sucB) of Pseudomonas aeruginosa (strain ATCC 15692 / DSM 22644 / CIP 104116 / JCM 14847 / LMG 12228 / 1C / PRS 101 / PAO1).